A 270-amino-acid polypeptide reads, in one-letter code: Large ribosomal subunit protein uL2c (270 aa).

The tract at residues 221–245 is disordered; sequence NPIDHPHGGGEGRAPIGRNQPKTPW.

This sequence belongs to the universal ribosomal protein uL2 family. Part of the 50S ribosomal subunit.

It localises to the plastid. This Cuscuta gronovii (Common dodder) protein is Large ribosomal subunit protein uL2c (rpl2).